The primary structure comprises 367 residues: E3 ubiquitin-protein ligase RGLG3 (367 aa).

One can recognise a VWFA domain in the interval 37-257 (NLILGIDFTK…KEAAFALAAL (221 aa)). The RING-type zinc-finger motif lies at 323–356 (CPICLTNPKDMAFSCGHTTCKECGVVITTCPLCR).

As to quaternary structure, interacts with UBC30, GRXS17 and GLB3. Binds to and coactivates GAF1/IDD2 and ENY/IDD1. As to expression, widely expressed.

Its subcellular location is the cytoplasm. The protein resides in the nucleus. It carries out the reaction S-ubiquitinyl-[E2 ubiquitin-conjugating enzyme]-L-cysteine + [acceptor protein]-L-lysine = [E2 ubiquitin-conjugating enzyme]-L-cysteine + N(6)-ubiquitinyl-[acceptor protein]-L-lysine.. Its function is as follows. Possesses E3 ubiquitin-protein ligase in vitro. Acts as upstream modulator of jasmonate (JA) signaling in response to various stimuli, such as JA-inhibited root growth, JA-inductive gene expression, coronatine-mediated pathogen susceptibility, wound-stimulated expression of JA-responsive genes and wound-induced JA biosynthesis. Controls fumonisin B1 (FB1)-triggered programmed cell death (PCD) by modulating the JA signaling pathway. May mediate salicylic acid (SA) suppression of JA signaling in FB1-induced responses. May mediate the formation of 'Lys-48'-linked multiubiquitin chains. Mediates the polyubiquitination and subsequent proteasomal degradation of the target protein GRXS17. The polypeptide is E3 ubiquitin-protein ligase RGLG3 (Arabidopsis thaliana (Mouse-ear cress)).